Here is a 553-residue protein sequence, read N- to C-terminus: Methionine--tRNA ligase (553 aa).

The short motif at 12 to 22 (PYANSQLHLGH) is the 'HIGH' region element. Residues Cys144, Cys147, Cys157, and Cys160 each contribute to the Zn(2+) site. The short motif at 332-336 (KFSKS) is the 'KMSKS' region element. ATP is bound at residue Lys335.

Belongs to the class-I aminoacyl-tRNA synthetase family. MetG type 1 subfamily. As to quaternary structure, monomer. It depends on Zn(2+) as a cofactor.

The protein resides in the cytoplasm. It catalyses the reaction tRNA(Met) + L-methionine + ATP = L-methionyl-tRNA(Met) + AMP + diphosphate. Is required not only for elongation of protein synthesis but also for the initiation of all mRNA translation through initiator tRNA(fMet) aminoacylation. This is Methionine--tRNA ligase from Dehalococcoides mccartyi (strain ATCC BAA-2266 / KCTC 15142 / 195) (Dehalococcoides ethenogenes (strain 195)).